We begin with the raw amino-acid sequence, 89 residues long: DNA-directed RNA polymerase subunit omega (89 aa).

It belongs to the RNA polymerase subunit omega family. The RNAP catalytic core consists of 2 alpha, 1 beta, 1 beta' and 1 omega subunit. When a sigma factor is associated with the core the holoenzyme is formed, which can initiate transcription.

It catalyses the reaction RNA(n) + a ribonucleoside 5'-triphosphate = RNA(n+1) + diphosphate. Functionally, promotes RNA polymerase assembly. Latches the N- and C-terminal regions of the beta' subunit thereby facilitating its interaction with the beta and alpha subunits. The polypeptide is DNA-directed RNA polymerase subunit omega (rpoZ) (Pasteurella multocida (strain Pm70)).